Consider the following 151-residue polypeptide: UPF0178 protein Swoo_1444 (151 aa).

It belongs to the UPF0178 family.

In Shewanella woodyi (strain ATCC 51908 / MS32), this protein is UPF0178 protein Swoo_1444.